Here is a 348-residue protein sequence, read N- to C-terminus: MESLAHIPPGYRFHPTDEELVDYYLKNKVAFPGMQVDVIKDVDLYKIEPWDIQELCGRGTGEEREWYFFSHKDKKYPTGTRTNRATGSGFWKATGRDKAIYSKQELVGMRKTLVFYKGRAPNGQKSDWIMHEYRLETDENGPPHEEGWVVCRAFKKKLTTMNYNNPRTMMGSSSGQESNWFTQQMDVGNGNYYHLPDLESPRMFQGSSSSSLSSLHQNDQDPYGVVLSTINATPTTIMQRDDGHVITNDDDHMIMMNTSTGDHHQSGLLVNDDHNDQVMDWQTLDKFVASQLIMSQEEEEVNKDPSDNSSNETFHHLSEEQAATMVSMNASSSSSPCSFYSWAQNTHT.

The region spanning 7 to 156 is the NAC domain; it reads IPPGYRFHPT…GWVVCRAFKK (150 aa). The DNA-binding element occupies 107–162; the sequence is VGMRKTLVFYKGRAPNGQKSDWIMHEYRLETDENGPPHEEGWVVCRAFKKKLTTMN. The segment at 325–348 is disordered; the sequence is MVSMNASSSSSPCSFYSWAQNTHT. Low complexity predominate over residues 327 to 341; that stretch reads SMNASSSSSPCSFYS.

Belongs to the plant vascular related NAC-domain protein family. In terms of assembly, homodimer. As to expression, expressed in root inner metaxylem vessels and in hypocotyl vessels. Present in root developing xylems. Accumulates in the xylem but not in interfascicular fibers or pith cells in inflorescence stems. Absent from secondary xylem in roots.

The protein resides in the nucleus. Functionally, transcription activator that binds to the secondary wall NAC binding element (SNBE), 5'-(T/A)NN(C/T)(T/C/G)TNNNNNNNA(A/C)GN(A/C/T)(A/T)-3', and to the tracheary elements (TE) specific regulating cis-element (TERE), 5'-CTTNAAAGCNA-3', in the promoter of target genes (e.g. genes involved in secondary wall biosynthesis, cell wall modification such as xylan accumulation, and programmed cell death). Involved in xylem formation in roots and shoots, especially regulating metaxylem vessel differentiation by promoting immature xylem vessel-specific genes expression, especially genes regulating programmed cell death (PCD) and secondary wall formation in tracheary elements (TE). Can activate MYB25, MYB46, MYB58, MYB63, MYB83, MYB103, CESA4, LBD15, LBD30, ERF115, XCP1, XCP2, NAC010/SND3, KNAT7, ASL19 and ASL20 expression. The chain is NAC domain-containing protein 101 from Arabidopsis thaliana (Mouse-ear cress).